The sequence spans 456 residues: Exodeoxyribonuclease 7 large subunit (456 aa).

It belongs to the XseA family. Heterooligomer composed of large and small subunits.

The protein localises to the cytoplasm. It catalyses the reaction Exonucleolytic cleavage in either 5'- to 3'- or 3'- to 5'-direction to yield nucleoside 5'-phosphates.. Functionally, bidirectionally degrades single-stranded DNA into large acid-insoluble oligonucleotides, which are then degraded further into small acid-soluble oligonucleotides. The protein is Exodeoxyribonuclease 7 large subunit of Shigella dysenteriae serotype 1 (strain Sd197).